The primary structure comprises 65 residues: Keratin-associated protein 20-2 (65 aa).

This sequence belongs to the KRTAP type 20 family. Interacts with hair keratins.

Its function is as follows. In the hair cortex, hair keratin intermediate filaments are embedded in an interfilamentous matrix, consisting of hair keratin-associated proteins (KRTAP), which are essential for the formation of a rigid and resistant hair shaft through their extensive disulfide bond cross-linking with abundant cysteine residues of hair keratins. The matrix proteins include the high-sulfur and high-glycine-tyrosine keratins. The sequence is that of Keratin-associated protein 20-2 (KRTAP20-2) from Homo sapiens (Human).